Reading from the N-terminus, the 157-residue chain is Large ribosomal subunit protein uL15 (157 aa).

Basic and acidic residues predominate over residues 1-13 (MKLNDLRDKDGAT). The tract at residues 1–39 (MKLNDLRDKDGATHSKKRLGRGIGSGSGKTAGRGVKGQK) is disordered. Residues 21–35 (RGIGSGSGKTAGRGV) show a composition bias toward gly residues.

It belongs to the universal ribosomal protein uL15 family. Part of the 50S ribosomal subunit.

In terms of biological role, binds to the 23S rRNA. This Mesorhizobium japonicum (strain LMG 29417 / CECT 9101 / MAFF 303099) (Mesorhizobium loti (strain MAFF 303099)) protein is Large ribosomal subunit protein uL15.